A 382-amino-acid chain; its full sequence is cAMP-dependent protein kinase type I-alpha regulatory subunit (382 aa).

Residue alanine 2 is modified to N-acetylalanine. The segment at alanine 2–asparagine 136 is dimerization and phosphorylation. The disordered stretch occupies residues threonine 62–arginine 96. The short motif at arginine 97–isoleucine 101 is the Pseudophosphorylation motif element. Residues leucine 138–serine 255, glutamate 203, arginine 212, isoleucine 256–valine 382, glutamate 327, and arginine 336 each bind 3',5'-cyclic AMP.

The protein belongs to the cAMP-dependent kinase regulatory chain family. The inactive form of the enzyme is composed of two regulatory chains and two catalytic chains. Activation by cAMP produces two active catalytic monomers and a regulatory dimer that binds four cAMP molecules. The pseudophosphorylation site binds to the substrate-binding region of the catalytic chain but is not phosphorylated. The physiological significance of phosphorylations by other kinases is unclear.

It localises to the cell membrane. The sequence is that of cAMP-dependent protein kinase type I-alpha regulatory subunit (PRKAR1A) from Gallus gallus (Chicken).